The sequence spans 430 residues: UPF0597 protein DSY1109 (430 aa).

The protein belongs to the UPF0597 family.

This is UPF0597 protein DSY1109 from Desulfitobacterium hafniense (strain Y51).